The chain runs to 536 residues: Cytochrome P450 monooxygenase macC (536 aa).

The helical transmembrane segment at 2-22 (ALLYITTAALALLLLFLRAVF) threads the bilayer. Cysteine 448 is a binding site for heme.

The protein belongs to the cytochrome P450 family. Requires heme as cofactor.

It is found in the membrane. It functions in the pathway secondary metabolite biosynthesis; terpenoid biosynthesis. Cytochrome P450 monooxygenase; part of the gene cluster that mediates the biosynthesis of macrophorins, isoprenoid epoxycyclohexenones containing cyclized drimane moieties. The first step of the pathway is the synthesis of 6-methylsalicylic acid (6-MSA) by the polyketide synthase macA. 6-MSA is then converted to m-cresol by the decarboxylase macB. The cytochrome P450 monooxygenase macC then catalyzes the oxidation of m-cresol to toluquinol. Epoxidation of toluquinol is then performed by the short chain dehydrogenase macD, with the help of macE, and a further prenylation by macG leads to 7-deacetoxyyanuthone A. The next step is the hydroxylation of C-22 of 7-deacetoxyyanuthone A by the cytochrome P450 monooxygenase macH to yield 22-deacetylyanuthone A. O-Mevalon transferase macI then attaches mevalon to the hydroxyl group of 22-deacetylyanuthone A to produce yanuthone E. The terpene cyclase macJ catalyzes the cyclization of 22-deacetylyanuthone A to macrophorin A. MacJ is also able to catalyze cyclization of yanuthone E and 7-deacetoxyyanuthone A to their corresponding macrophorins. The macJ products can be further modified by macH and macJ, as well as by the FAD-dependent monooxygenase macF, to produce additional macrophorins, including 4'-oxomacrophorin A, 4'-oxomacrophorin D and 4'-oxomacrophorin E. In Penicillium terrestre, this protein is Cytochrome P450 monooxygenase macC.